The following is an 887-amino-acid chain: Alanine--tRNA ligase (887 aa).

Positions 564, 568, 676, and 680 each coordinate Zn(2+). The segment at 854 to 873 (GQGGGGRPDMAQSGGPKGNK) is disordered.

It belongs to the class-II aminoacyl-tRNA synthetase family. Zn(2+) serves as cofactor.

It is found in the cytoplasm. The catalysed reaction is tRNA(Ala) + L-alanine + ATP = L-alanyl-tRNA(Ala) + AMP + diphosphate. Its function is as follows. Catalyzes the attachment of alanine to tRNA(Ala) in a two-step reaction: alanine is first activated by ATP to form Ala-AMP and then transferred to the acceptor end of tRNA(Ala). Also edits incorrectly charged Ser-tRNA(Ala) and Gly-tRNA(Ala) via its editing domain. This is Alanine--tRNA ligase from Bartonella henselae (strain ATCC 49882 / DSM 28221 / CCUG 30454 / Houston 1) (Rochalimaea henselae).